The chain runs to 115 residues: uncharacterized protein (115 aa).

This is an uncharacterized protein from Ostreid herpesvirus 1 (isolate France) (OsHV-1).